The primary structure comprises 2169 residues: Vitellogenin-A1 (2169 aa).

An N-terminal signal peptide occupies residues Met-1 to Ala-46. N-linked (GlcNAc...) asparagine glycosylation is found at Asn-107 and Asn-125. The Vitellogenin domain maps to Trp-116–Leu-1008. Sulfotyrosine is present on residues Tyr-159 and Tyr-163. Residues Asn-360, Asn-391, and Asn-435 are each glycosylated (N-linked (GlcNAc...) asparagine). 2 disordered regions span residues Asp-426–Glu-481 and Asn-514–Glu-570. Over residues Ser-438–Ser-461 the composition is skewed to low complexity. Asn-514 carries an N-linked (GlcNAc...) asparagine glycan. A compositionally biased stretch (low complexity) spans Ser-517 to Ser-531. Asn-538 carries an N-linked (GlcNAc...) asparagine glycan. Positions Ser-541–Glu-570 are enriched in low complexity. 3 N-linked (GlcNAc...) asparagine glycosylation sites follow: Asn-587, Asn-763, and Asn-781. Sulfotyrosine is present on residues Tyr-1067, Tyr-1070, and Tyr-1074. N-linked (GlcNAc...) asparagine glycosylation is found at Asn-1140, Asn-1233, and Asn-1336. Tyr-1563, Tyr-1564, and Tyr-1570 each carry sulfotyrosine. Asn-1652 and Asn-1696 each carry an N-linked (GlcNAc...) asparagine glycan. 6 positions are modified to sulfotyrosine: Tyr-1737, Tyr-1806, Tyr-1809, Tyr-1822, Tyr-1824, and Tyr-1888. A VWFD domain is found at Pro-1770–Thr-1979. 2 cysteine pairs are disulfide-bonded: Cys-1772–Cys-1942 and Cys-1794–Cys-1978. The N-linked (GlcNAc...) asparagine glycan is linked to Asn-1977. Residues Glu-2026 to Ser-2063 show a composition bias toward low complexity. The tract at residues Glu-2026–Cys-2081 is disordered. Residues Glu-2064 to Lys-2079 show a composition bias toward basic and acidic residues.

Post-translationally, glycosylated, phosphorylated and sulfated. The large subunit is sulfated more extensively than the small one. Produced by the fat body, where it is cleaved in the rough endoplasmic reticulum or cis-Golgi before being secreted into hemolymph. It is then sequestered by a single class of receptor mediated endocytosis in the ovary.

Its function is as follows. Precursor of the egg-yolk proteins that are sources of nutrients during embryonic development. May supply aromatic amino acids to the cuticle of rapidly developing embryos. The sequence is that of Vitellogenin-A1 (VGA1) from Aedes aegypti (Yellowfever mosquito).